We begin with the raw amino-acid sequence, 230 residues long: IIGGQECDETGHPWLALLHRSEGSTCSGVLLNQDWIVTAAHCFYLGELRIGLGVHNRRVLRGNEQVRVSARKKCYPATASIITNSSCSEYTDDIMLIKLDSSVEYTERVRPLSLPTSPASEGAECTVMGWGTTTPPDVTYPAVPVCVRIEMLNNAVCELARDLWNITDSVLCAGTWFGGKDSCKGDSGGPLICRGQLTGIVSWGGFPCEQPLEYGVYTKVISFLFWIQSI.

The region spanning 1–230 (IIGGQECDET…ISFLFWIQSI (230 aa)) is the Peptidase S1 domain. 5 cysteine pairs are disulfide-bonded: Cys7–Cys146, Cys26–Cys42, Cys125–Cys193, Cys157–Cys172, and Cys183–Cys208. His41 functions as the Charge relay system in the catalytic mechanism. N-linked (GlcNAc...) asparagine glycosylation is present at Asn84. Asp93 (charge relay system) is an active-site residue. The Charge relay system role is filled by Ser187.

Belongs to the peptidase S1 family. In terms of processing, extensively glycosylated, contains approximately 8 mol of monosaccharide per mol of toxin. Expressed by the mandibular venom gland.

It localises to the secreted. Its function is as follows. Has kallikrein-like activity, releases bradykinin from kininogen. Catalyzes the hydrolysis of various arginine ester substrates for trypsin and thrombin and degrades both angiotensin I and II by cleavage of the dipeptide Asp-Arg from the NH2-terminal end. Fibrinogen is also degraded but a fibrin clot is not produced. May have a potentiating effect on potent hemorrhagic toxins present in the venom. The sequence is that of Gilatoxin from Heloderma horridum horridum (Mexican beaded lizard).